Consider the following 533-residue polypeptide: Cytochrome P450 9e2 (533 aa).

Cysteine 475 contributes to the heme binding site.

This sequence belongs to the cytochrome P450 family. Heme serves as cofactor.

Its subcellular location is the endoplasmic reticulum membrane. The protein resides in the microsome membrane. The sequence is that of Cytochrome P450 9e2 (CYP9E2) from Blattella germanica (German cockroach).